The following is a 416-amino-acid chain: Multifunctional CCA protein (416 aa).

The ATP site is built by Gly8 and Arg11. Positions 8 and 11 each coordinate CTP. Positions 21 and 23 each coordinate Mg(2+). Residues Arg91, Arg137, and Arg140 each coordinate ATP. CTP is bound by residues Arg91, Arg137, and Arg140. Residues 228 to 329 (TGVHTLMVLA…VKIFDKADFW (102 aa)) form the HD domain.

The protein belongs to the tRNA nucleotidyltransferase/poly(A) polymerase family. Bacterial CCA-adding enzyme type 1 subfamily. Monomer. Can also form homodimers and oligomers. The cofactor is Mg(2+). Ni(2+) serves as cofactor.

It carries out the reaction a tRNA precursor + 2 CTP + ATP = a tRNA with a 3' CCA end + 3 diphosphate. It catalyses the reaction a tRNA with a 3' CCA end + 2 CTP + ATP = a tRNA with a 3' CCACCA end + 3 diphosphate. Catalyzes the addition and repair of the essential 3'-terminal CCA sequence in tRNAs without using a nucleic acid template. Adds these three nucleotides in the order of C, C, and A to the tRNA nucleotide-73, using CTP and ATP as substrates and producing inorganic pyrophosphate. tRNA 3'-terminal CCA addition is required both for tRNA processing and repair. Also involved in tRNA surveillance by mediating tandem CCA addition to generate a CCACCA at the 3' terminus of unstable tRNAs. While stable tRNAs receive only 3'-terminal CCA, unstable tRNAs are marked with CCACCA and rapidly degraded. The polypeptide is Multifunctional CCA protein (Shewanella baltica (strain OS223)).